The chain runs to 359 residues: Alanine racemase, biosynthetic (359 aa).

The active-site Proton acceptor; specific for D-alanine is the lysine 34. Lysine 34 carries the post-translational modification N6-(pyridoxal phosphate)lysine. Position 129 (arginine 129) interacts with substrate. Tyrosine 255 serves as the catalytic Proton acceptor; specific for L-alanine. Methionine 303 serves as a coordination point for substrate.

This sequence belongs to the alanine racemase family. As to quaternary structure, monomer but homodimer in the presence of the substrate. Pyridoxal 5'-phosphate serves as cofactor.

It carries out the reaction L-alanine = D-alanine. The protein operates within amino-acid biosynthesis; D-alanine biosynthesis; D-alanine from L-alanine: step 1/1. It functions in the pathway cell wall biogenesis; peptidoglycan biosynthesis. Functionally, catalyzes the interconversion of L-alanine and D-alanine. This is Alanine racemase, biosynthetic (alr) from Shigella sonnei.